The primary structure comprises 244 residues: tRNA (guanine-N(1)-)-methyltransferase (244 aa).

S-adenosyl-L-methionine contacts are provided by residues glycine 113 and 132–137 (IGDYVL).

The protein belongs to the RNA methyltransferase TrmD family. In terms of assembly, homodimer.

It localises to the cytoplasm. The catalysed reaction is guanosine(37) in tRNA + S-adenosyl-L-methionine = N(1)-methylguanosine(37) in tRNA + S-adenosyl-L-homocysteine + H(+). Functionally, specifically methylates guanosine-37 in various tRNAs. The protein is tRNA (guanine-N(1)-)-methyltransferase of Shouchella clausii (strain KSM-K16) (Alkalihalobacillus clausii).